We begin with the raw amino-acid sequence, 250 residues long: MADS-box transcription factor 47 (250 aa).

Residues 1–10 (MAGGGGGGGR) are compositionally biased toward gly residues. Disordered stretches follow at residues 1–20 (MAGG…AATG) and 196–250 (SRME…FSSK). A compositionally biased stretch (basic and acidic residues) spans 11 to 20 (GEGEGRAATG). Residues 20–80 (GKRERIAIRR…GKLFQFASTS (61 aa)) enclose the MADS-box domain. In terms of domain architecture, K-box spans 106–198 (QGEDSSTCAR…QLQVSRMSRM (93 aa)). Residues 214 to 224 (GQSSESVTNAS) are compositionally biased toward polar residues.

May interact with MADS18. Expressed in roots, shoots and developing panicles. Expressed in mature stems and leaves, flowering panicles, developing seeds, and mature seeds.

Its subcellular location is the nucleus. In terms of biological role, transcription factor that modulates expressions of multiple genes involved in cell signaling and gene transcription. Plays a negative regulatory role in brassinosteroid signaling. This chain is MADS-box transcription factor 47, found in Oryza sativa subsp. japonica (Rice).